The chain runs to 678 residues: Zinc finger protein 334 (678 aa).

Positions 8-79 (VSFQDLTVNF…EEFSNQNYPE (72 aa)) constitute a KRAB domain. 14 consecutive C2H2-type zinc fingers follow at residues 235 to 257 (NEPC…QRIH), 263 to 285 (YVCN…QRIH), 291 to 313 (YECS…QKIH), 319 to 341 (YECN…FRSH), 347 to 369 (YECK…QRTH), 375 to 397 (NECK…QRIH), 403 to 425 (YECS…RRSH), 431 to 453 (YECS…QITH), 459 to 481 (YECN…QRTH), 542 to 564 (YECN…QRTH), 570 to 592 (YECN…QRTH), 598 to 620 (YERN…RRIH), 626 to 648 (YECN…QKIH), and 654 to 676 (YECN…QKSH).

Belongs to the krueppel C2H2-type zinc-finger protein family.

Its subcellular location is the nucleus. In terms of biological role, may be involved in transcriptional regulation. This Pongo abelii (Sumatran orangutan) protein is Zinc finger protein 334 (ZNF334).